The primary structure comprises 591 residues: V-type ATP synthase alpha chain (591 aa).

Position 242-249 (242-249 (GPFGAGKT)) interacts with ATP.

This sequence belongs to the ATPase alpha/beta chains family.

The catalysed reaction is ATP + H2O + 4 H(+)(in) = ADP + phosphate + 5 H(+)(out). Produces ATP from ADP in the presence of a proton gradient across the membrane. The V-type alpha chain is a catalytic subunit. This chain is V-type ATP synthase alpha chain, found in Chlamydia trachomatis serovar L2 (strain ATCC VR-902B / DSM 19102 / 434/Bu).